A 561-amino-acid polypeptide reads, in one-letter code: Carboxylesterase patB (561 aa).

Positions 1–19 are cleaved as a signal peptide; sequence MQIINWASLLLVTWETVVA. 3 N-linked (GlcNAc...) asparagine glycosylation sites follow: Asn38, Asn69, and Asn109. Ser263 serves as the catalytic Acyl-ester intermediate. Ser263 serves as a coordination point for substrate. N-linked (GlcNAc...) asparagine glycosylation occurs at Asn316. The Charge relay system role is filled by Glu385. N-linked (GlcNAc...) asparagine glycans are attached at residues Asn393, Asn412, Asn429, and Asn496.

The protein belongs to the type-B carboxylesterase/lipase family.

The protein localises to the cytoplasm. It is found in the cytosol. The catalysed reaction is a carboxylic ester + H2O = an alcohol + a carboxylate + H(+). The protein operates within mycotoxin biosynthesis; patulin biosynthesis. In terms of biological role, carboxylesterase; part of the gene cluster that mediates the biosynthesis of patulin, an acetate-derived tetraketide mycotoxin produced by several fungal species that shows antimicrobial properties against several bacteria. The function of patB in patulin synthesis has still to be characterized. The pathway begins with the synthesis of 6-methylsalicylic acid by the polyketide synthase (PKS) patK via condensation of acetate and malonate units. The 6-methylsalicylic acid decarboxylase patG then catalyzes the decarboxylation of 6-methylsalicylic acid to yield m-cresol (also known as 3-methylphenol). These first reactions occur in the cytosol. The intermediate m-cresol is then transported into the endoplasmic reticulum where the cytochrome P450 monooxygenase patH converts it to m-hydroxybenzyl alcohol, which is further converted to gentisyl alcohol by the cytochrome P450 monooxygenase patI. The oxidoreductases patJ and patO further convert gentisyl alcohol to isoepoxydon in the vacuole. PatN catalyzes then the transformation of isoepoxydon into phyllostine. The cluster protein patF is responsible for the conversion from phyllostine to neopatulin whereas the alcohol dehydrogenase patD converts neopatulin to E-ascladiol. The steps between isoepoxydon and E-ascladiol occur in the cytosol, and E-ascladiol is probably secreted to the extracellular space by one of the cluster-specific transporters patC or patM. Finally, the secreted patulin synthase patE catalyzes the conversion of E-ascladiol to patulin. This Penicillium expansum (Blue mold rot fungus) protein is Carboxylesterase patB.